We begin with the raw amino-acid sequence, 220 residues long: Casparian strip membrane protein 4 (220 aa).

The tract at residues 1–39 is disordered; that stretch reads MDSRREVEESSTAPILESKRTRSNGKGKSIDGDHSPPHA. The Cytoplasmic portion of the chain corresponds to 1-60; that stretch reads MDSRREVEESSTAPILESKRTRSNGKGKSIDGDHSPPHAATVVTTKATPLQKGGMKKGIA. Residues 61–81 traverse the membrane as a helical segment; it reads ILDFILRLGAIGAALGAAVIM. The Extracellular segment spans residues 82–108; sequence GTNEQILPFFTQFLQFHAQWDDFPMFK. The chain crosses the membrane as a helical span at residues 109–129; that stretch reads FFVVANGAAAGFLILSLPFSI. At 130 to 141 the chain is on the cytoplasmic side; it reads VCIVRPLAAGPR. The helical transmembrane segment at 142-162 threads the bilayer; the sequence is FLLVIVDLVLMALVVAAASSA. Over 163–194 the chain is Extracellular; sequence AAVVYLAHNGSQDANWNAICQQFTDFCQGSSL. A glycan (N-linked (GlcNAc...) asparagine) is linked at Asn171. A helical transmembrane segment spans residues 195–215; that stretch reads AVVASFVASVFLACLVVVSSV. At 216–220 the chain is on the cytoplasmic side; it reads ALKRT.

The protein belongs to the Casparian strip membrane proteins (CASP) family. As to quaternary structure, homodimer and heterodimers.

It is found in the cell membrane. Its function is as follows. Regulates membrane-cell wall junctions and localized cell wall deposition. Required for establishment of the Casparian strip membrane domain (CSD) and the subsequent formation of Casparian strips, a cell wall modification of the root endodermis that determines an apoplastic barrier between the intraorganismal apoplasm and the extraorganismal apoplasm and prevents lateral diffusion. In Medicago truncatula (Barrel medic), this protein is Casparian strip membrane protein 4.